We begin with the raw amino-acid sequence, 181 residues long: Probable pyruvoyl-dependent arginine decarboxylase (181 aa).

Ser-43 carries the pyruvic acid (Ser) modification.

It belongs to the PdaD family. Requires pyruvate as cofactor.

The enzyme catalyses L-arginine + H(+) = agmatine + CO2. This chain is Probable pyruvoyl-dependent arginine decarboxylase, found in Chlorobium phaeobacteroides (strain BS1).